The primary structure comprises 46 residues: Antimicrobial peptide eNAP-2 (46 aa).

One can recognise a WAP domain in the interval 12–46 (RPGRCPTVPPGTFGHCACLCTGDASEPKGQKCCSN).

In terms of biological role, has antibiotic activity against several equine uterine pathogens; S.zooepidemicus, E.coli and P.aeruginosa. Highly efficient against S.zoopedemicus. Not active against K.pneumoniae. Selectively inactivates microbial serine proteases (subtilisin A and proteinase K) without inhibiting mammalian serine proteases (human neutrophil elastase, human cathepsin G and bovine pancreatic trypsin). This chain is Antimicrobial peptide eNAP-2, found in Equus caballus (Horse).